A 270-amino-acid polypeptide reads, in one-letter code: tRNA pseudouridine synthase B (270 aa).

Residue Asp49 is the Nucleophile of the active site.

Belongs to the pseudouridine synthase TruB family. Type 1 subfamily.

It carries out the reaction uridine(55) in tRNA = pseudouridine(55) in tRNA. Functionally, responsible for synthesis of pseudouridine from uracil-55 in the psi GC loop of transfer RNAs. In Bartonella quintana (strain Toulouse) (Rochalimaea quintana), this protein is tRNA pseudouridine synthase B.